The primary structure comprises 574 residues: Membrane protein insertase YidC (574 aa).

6 consecutive transmembrane segments (helical) span residues 6–26 (VFLI…WGKE), 350–370 (VIDY…FWVL), 376–396 (FLHN…LVLY), 447–467 (GGCL…WVLV), 491–511 (FILP…TPTP), and 525–545 (PLVF…YWVV).

The protein belongs to the OXA1/ALB3/YidC family. Type 1 subfamily. In terms of assembly, interacts with the Sec translocase complex via SecD. Specifically interacts with transmembrane segments of nascent integral membrane proteins during membrane integration.

The protein localises to the cell inner membrane. Functionally, required for the insertion and/or proper folding and/or complex formation of integral membrane proteins into the membrane. Involved in integration of membrane proteins that insert both dependently and independently of the Sec translocase complex, as well as at least some lipoproteins. Aids folding of multispanning membrane proteins. The polypeptide is Membrane protein insertase YidC (Xanthomonas oryzae pv. oryzae (strain KACC10331 / KXO85)).